The primary structure comprises 1480 residues: DNA polymerase zeta catalytic subunit (1480 aa).

The tract at residues 403-488 (DRSKFPKSPL…GDTRKAGKRL (86 aa)) is disordered. Over residues 411-427 (PLNSSQEVTIHSSQDRQ) the composition is skewed to polar residues. Residues 457-468 (TKREIEFCRDLP) show a composition bias toward basic and acidic residues. Over residues 470-479 (RPTSSEPNQG) the composition is skewed to polar residues. Positions 1381, 1384, 1400, and 1403 each coordinate Zn(2+). The CysA-type zinc-finger motif lies at 1381–1403 (CSSCLKNNIEIIPDKINSLCSDC). The [4Fe-4S] cluster site is built by cysteine 1432, cysteine 1435, cysteine 1446, and cysteine 1451. The CysB motif signature appears at 1432–1451 (CRGCSKLSSSDPVLCKSNSC).

The protein belongs to the DNA polymerase type-B family. In terms of assembly, forms DNA polymerase zeta with rev7. [4Fe-4S] cluster serves as cofactor.

Its subcellular location is the mitochondrion. The protein localises to the nucleus. The catalysed reaction is DNA(n) + a 2'-deoxyribonucleoside 5'-triphosphate = DNA(n+1) + diphosphate. Functionally, nonessential DNA polymerase. Required for DNA damage induced mutagenesis. Involved in DNA repair, mitochondrial DNA repair and translesion synthesis. Has a role in the bypass of abasic (AP) sites. In Schizosaccharomyces pombe (strain 972 / ATCC 24843) (Fission yeast), this protein is DNA polymerase zeta catalytic subunit (rev3).